Consider the following 80-residue polypeptide: Dolichol-phosphate mannose synthase subunit 2 (80 aa).

The next 2 helical transmembrane spans lie at 10–30 (LLLSSISLSIFTYYTFWVIIL) and 50–70 (ILVPVFAGIALLSLISVFIGM).

It belongs to the DPM2 family. As to quaternary structure, component of the dolichol-phosphate mannose (DPM) synthase complex composed of DPMS1, DPMS2 and DPMS3; in the complex interacts directly with DPMS3. Associates with the GPI-GlcNAc transferase (GPI-GnT) complex.

It is found in the endoplasmic reticulum membrane. It functions in the pathway protein modification; protein glycosylation. Its function is as follows. Regulates the biosynthesis of dolichol phosphate-mannose. Regulatory subunit of the dolichol-phosphate mannose (DPM) synthase complex; essential for the ER localization and stable expression of DPMS1. This is Dolichol-phosphate mannose synthase subunit 2 from Arabidopsis thaliana (Mouse-ear cress).